We begin with the raw amino-acid sequence, 1153 residues long: MFYSCCVSIEPRDPASEPTPTPRRPLRKSQPRSFSQAQPLSWAQLESVLSGRGAGLRNLRAVGVGEGQRRTTSLDPAEAEGTGAEGASQKGITTPFAELHASSAYNFLRGASQPEQMVEAARELGLSALACVDRDGFYGAARFATAVAESGADLATVFGAELSLDVPLTVLCKGREGYTRLSRVIADARMADPDKDSVRYPSLPQLAEAAGGHWLVLLDWRRTDAQLVDFFGADNVVVELQHTMNPADADRNERLHALAVRHGLREIVSSAPTCATPKHSRLAGAKAALRERKDMAAAEPTTHPVGGSWLRSGEEMLQLAGDCEWLARAVETSVQVAEECAFTLDLVAPNLPHFPVPEGYTEMTWLRAITERGGAQRYGPRGSSAAANQAWATIDRELETIEQLGFPGYFLIVHDIVSFCHENNIFCQGRGSAANSAVCFALGITTVDAVASGLLFERFLSPERDGPPDIDLDIESGRREEAIQYVYSRYGRENAAQVANVITYRRRGATRDAGRALGYAPGQIDAWTRHPEQTPDVVQNLAEQMLDHPRHLGIHSGGMVICDRPIAQVVPTEWARMEGRSVVQWDKDDCAAVGLVKFDLLGLGMLEALHHAVDQVRAHRGREVELWRLDPTESEVYAMLSRADAVGVFQVESRAQMSTLPRLKPRTFYDLVVEVALIRPGPIQGGSVHPYIRRRNGLEPVTFDHPCLEPALTKTLGIPLFQEQLMQMAVDAAGFSGAEADTLRRAMGSKRSPQKMERLKKRFYQGLEAKNGIRGVVADRLWDKIVAFASYGFPESHSQSFASLVYYSAWFKYHYPAEFCVALLRAQPMGFYSPQSLLADARRHGVEVLPVDVNDSDVQVDAVASLATPPRTNRPTGVHGLGRGTGEPVGQIRLGLSGAGGVKGISAEVAERIVEARERIGRFTSVEDLSREAGLTVAHVEKLARAGALGSLGLTRRQAVWAAGVAATERPGMLPGTSGVHAPALPGMSAFEMVASELATTGVTTAEHPVQLLREYLDEWHLRPAPRGVHPGDAAPRGGAAVVTADSLLRVPDGTRVRVAGVVTHRQRPATAGGVVFFGLEDETGLANIVVSQGLWARQRAVALNAKILVVRGIVHNAEGAATVTADLLEQVETQLRPAGEIAGAHAGSRDFR.

2 disordered regions span residues 1–39 and 64–89; these read MFYSCCVSIEPRDPASEPTPTPRRPLRKSQPRSFSQAQP and VGEGQRRTTSLDPAEAEGTGAEGASQ.

Belongs to the DNA polymerase type-C family. DnaE2 subfamily.

Its subcellular location is the cytoplasm. The enzyme catalyses DNA(n) + a 2'-deoxyribonucleoside 5'-triphosphate = DNA(n+1) + diphosphate. DNA polymerase involved in damage-induced mutagenesis and translesion synthesis (TLS). It is not the major replicative DNA polymerase. In Corynebacterium jeikeium (strain K411), this protein is Error-prone DNA polymerase.